Reading from the N-terminus, the 87-residue chain is Small ribosomal subunit protein uS17 (87 aa).

This sequence belongs to the universal ribosomal protein uS17 family. In terms of assembly, part of the 30S ribosomal subunit.

One of the primary rRNA binding proteins, it binds specifically to the 5'-end of 16S ribosomal RNA. The polypeptide is Small ribosomal subunit protein uS17 (Bacillus cytotoxicus (strain DSM 22905 / CIP 110041 / 391-98 / NVH 391-98)).